Reading from the N-terminus, the 374-residue chain is Tryptophan--tRNA ligase (374 aa).

The 'HIGH' region signature appears at 81–89; that stretch reads PSGPVHIGH. The short motif at 258-262 is the 'KMSKS' region element; sequence KMSAS.

Belongs to the class-I aminoacyl-tRNA synthetase family.

The protein localises to the cytoplasm. It carries out the reaction tRNA(Trp) + L-tryptophan + ATP = L-tryptophyl-tRNA(Trp) + AMP + diphosphate + H(+). In Pyrobaculum calidifontis (strain DSM 21063 / JCM 11548 / VA1), this protein is Tryptophan--tRNA ligase.